Here is a 367-residue protein sequence, read N- to C-terminus: Splicing factor U2AF-associated protein 2 (367 aa).

A disordered region spans residues 36–104 (YDPNSLKMNK…SKSENSEASP (69 aa)). Over residues 61–78 (TEGKESSNGEDRHTKRLY) the composition is skewed to basic and acidic residues. 2 RRM domains span residues 112–193 (VYIQ…KMRV) and 268–329 (LLID…VVEA).

This sequence belongs to the HTATSF1 family. Interacts with the U2AF large and U2AF small subunits.

In terms of biological role, has a role in pre-mRNA splicing. In Schizosaccharomyces pombe (strain 972 / ATCC 24843) (Fission yeast), this protein is Splicing factor U2AF-associated protein 2 (uap2).